The following is a 138-amino-acid chain: MERTFAMIKPDGVRRGLTPEILARIQKKGYRVVGLKQMLISRELAERHYAEHRERPFFGELVDFITSGPVVAIALEGENAIAGWRAMMGATNPANAAPGTIRADFATTTGENVTHGSDSPESAARELSLFFREDELLK.

ATP is bound by residues Lys9, Phe57, Arg85, Thr91, Arg102, and Asn112. The active-site Pros-phosphohistidine intermediate is the His115.

This sequence belongs to the NDK family. As to quaternary structure, homotetramer. The cofactor is Mg(2+).

It localises to the cytoplasm. It catalyses the reaction a 2'-deoxyribonucleoside 5'-diphosphate + ATP = a 2'-deoxyribonucleoside 5'-triphosphate + ADP. It carries out the reaction a ribonucleoside 5'-diphosphate + ATP = a ribonucleoside 5'-triphosphate + ADP. Its function is as follows. Major role in the synthesis of nucleoside triphosphates other than ATP. The ATP gamma phosphate is transferred to the NDP beta phosphate via a ping-pong mechanism, using a phosphorylated active-site intermediate. In Deinococcus geothermalis (strain DSM 11300 / CIP 105573 / AG-3a), this protein is Nucleoside diphosphate kinase.